A 223-amino-acid chain; its full sequence is Deoxyribose-phosphate aldolase (223 aa).

The active-site Proton donor/acceptor is the aspartate 91. The active-site Schiff-base intermediate with acetaldehyde is lysine 153. Lysine 182 (proton donor/acceptor) is an active-site residue.

It belongs to the DeoC/FbaB aldolase family. DeoC type 1 subfamily.

The protein localises to the cytoplasm. It carries out the reaction 2-deoxy-D-ribose 5-phosphate = D-glyceraldehyde 3-phosphate + acetaldehyde. Its pathway is carbohydrate degradation; 2-deoxy-D-ribose 1-phosphate degradation; D-glyceraldehyde 3-phosphate and acetaldehyde from 2-deoxy-alpha-D-ribose 1-phosphate: step 2/2. Functionally, catalyzes a reversible aldol reaction between acetaldehyde and D-glyceraldehyde 3-phosphate to generate 2-deoxy-D-ribose 5-phosphate. This Yersinia enterocolitica serotype O:8 / biotype 1B (strain NCTC 13174 / 8081) protein is Deoxyribose-phosphate aldolase.